A 254-amino-acid chain; its full sequence is Alcohol dehydrogenase 1 (254 aa).

Residue 10–33 (FVAGLGGIGFDTSREIVKKGPKNL) coordinates NAD(+). Position 138 (serine 138) interacts with substrate. Tyrosine 151 acts as the Proton acceptor in catalysis.

Belongs to the short-chain dehydrogenases/reductases (SDR) family. As to quaternary structure, homodimer.

The catalysed reaction is a primary alcohol + NAD(+) = an aldehyde + NADH + H(+). It carries out the reaction a secondary alcohol + NAD(+) = a ketone + NADH + H(+). The sequence is that of Alcohol dehydrogenase 1 (Adh1) from Drosophila mojavensis (Fruit fly).